A 126-amino-acid chain; its full sequence is Glycine cleavage system H protein (126 aa).

The Lipoyl-binding domain occupies 22–104 (VATIGITEYA…YEKAWMVKVE (83 aa)). Lys63 is subject to N6-lipoyllysine.

It belongs to the GcvH family. As to quaternary structure, the glycine cleavage system is composed of four proteins: P, T, L and H. (R)-lipoate is required as a cofactor.

The glycine cleavage system catalyzes the degradation of glycine. The H protein shuttles the methylamine group of glycine from the P protein to the T protein. In terms of biological role, is also involved in protein lipoylation via its role as an octanoyl/lipoyl carrier protein intermediate. This chain is Glycine cleavage system H protein, found in Staphylococcus aureus (strain JH1).